Here is a 763-residue protein sequence, read N- to C-terminus: Cadherin-like protein 26 (763 aa).

A signal peptide spans 1–20; it reads MDTRGCAWLLLLLSLPQGQS. Cadherin domains are found at residues 21 to 140, 141 to 250, 251 to 371, and 370 to 478; these read HQPL…APQF, PEKE…MPTF, MEDR…PPAF, and AFHP…APTL. Residues 21-590 lie on the Extracellular side of the membrane; that stretch reads HQPLHRSKRR…SECEEPSDTW (570 aa). 3 N-linked (GlcNAc...) asparagine glycosylation sites follow: asparagine 56, asparagine 60, and asparagine 146. N-linked (GlcNAc...) asparagine glycans are attached at residues asparagine 394 and asparagine 440. Residues 591 to 611 traverse the membrane as a helical segment; that stretch reads LLWWALSPVGAALMVLSAALL. Residues 612-763 lie on the Cytoplasmic side of the membrane; it reads CLLRCSCTFG…AMCFTSRVPS (152 aa).

As to quaternary structure, homodimer. Component of a cadherin:catenin adhesion complex composed of at least of CDH26, beta-catenin/CTNNB1, alpha-catenin/CTNNA1 and p120 catenin/CTNND1. Post-translationally, N-glycosylated.

Its subcellular location is the cell membrane. In terms of biological role, cadherins are calcium-dependent cell adhesion proteins. They preferentially interact with themselves in a homophilic manner in connecting cells; cadherins may thus contribute to the sorting of heterogeneous cell types. Ligand for integrins alpha-E/beta-7, ITGAE:ITGAB7, alpha-4/beta-7, ITGA4:ITGAB7 and alpha-4/beta-1, ITGA4:ITGAB1 through which modulates CD4(+) T cells activation. The sequence is that of Cadherin-like protein 26 (Cdh26) from Mus musculus (Mouse).